The sequence spans 183 residues: ATP-dependent protease subunit HslV (183 aa).

Thr-13 is a catalytic residue. Positions 168, 171, and 174 each coordinate Na(+).

The protein belongs to the peptidase T1B family. HslV subfamily. As to quaternary structure, a double ring-shaped homohexamer of HslV is capped on each side by a ring-shaped HslU homohexamer. The assembly of the HslU/HslV complex is dependent on binding of ATP.

It localises to the cytoplasm. It catalyses the reaction ATP-dependent cleavage of peptide bonds with broad specificity.. With respect to regulation, allosterically activated by HslU binding. Protease subunit of a proteasome-like degradation complex believed to be a general protein degrading machinery. In Xanthomonas axonopodis pv. citri (strain 306), this protein is ATP-dependent protease subunit HslV.